The sequence spans 215 residues: Sodium channel regulatory subunit beta-3 (215 aa).

Residues 1-24 (MPAFNRLLPLASLVLIYWVRVCFP) form the signal peptide. The Ig-like C2-type domain maps to 25–138 (VCVEVPSETE…EAHRPFVKTT (114 aa)). Residues 25-156 (VCVEVPSETE…EEAGEDFTSV (132 aa)) are Extracellular-facing. 2 disulfides stabilise this stretch: cysteine 26/cysteine 48 and cysteine 45/cysteine 120. Residues asparagine 95, asparagine 109, asparagine 113, and asparagine 121 are each glycosylated (N-linked (GlcNAc...) asparagine). The chain crosses the membrane as a helical span at residues 157–178 (VSEIMMYILLVFLTLWLFIEMI). The Cytoplasmic portion of the chain corresponds to 179 to 215 (YCYRKVSKAEEAAQENASDYLAIPSENKENSVVPVEE).

The protein belongs to the sodium channel auxiliary subunit SCN3B (TC 8.A.17) family. A voltage-gated sodium (Nav) channel consists of an ion-conducting pore-forming alpha subunit functional on its own that is regulated by one or more beta subunits. Forms homodimers and homotrimers. SCN3B is non-covalently associated with alpha subunits and induces the formation of alpha subunit oligomers, including trimers. Interacts with SCN5A/Nav1.5; regulatory subunit of SCN5A/Nav1.5. Interacts with SCN7A/Nav2.1; probable regulatory subunit of SCN7A/Nav2.1. Interacts with SCN10A; regulatory subunit of SCN10A/Nav1.8. Interacts with NFASC; probably involved in targeting the sodium channels to the nodes of Ranvier. In terms of processing, intramolecular disulfide bonds favor the voltage-gated sodium channel oligomeric complex assembly. Post-translationally, N-glycosylated. As to expression, expressed broadly in neurons in the central and peripheral nervous systems, but not in glia and most non-neuronal cells. Weak detection in lung and adrenal gland.

The protein resides in the cell membrane. Regulatory subunit of multiple voltage-gated sodium (Nav) channels directly mediating the depolarization of excitable membranes. Navs, also called VGSCs (voltage-gated sodium channels) or VDSCs (voltage-dependent sodium channels), operate by switching between closed and open conformations depending on the voltage difference across the membrane. In the open conformation they allow Na(+) ions to selectively pass through the pore, along their electrochemical gradient. The influx of Na+ ions provokes membrane depolarization, initiating the propagation of electrical signals throughout cells and tissues. The accessory beta subunits participate in localization and functional modulation of the Nav channels. Voltage-gated sodium channels regulatory subunit that modulates channel gating kinetics. Modulates the activity of SCN2A/Nav1.2, causing a hyperpolarizing shift in the voltage-dependence of inactivation and increasing the fraction of channels operating in the fast gating mode. Also able to induce unique persistent SCN2A/Nav1.2-mediated sodium currents. Could modulate the activity of SCN10A/Nav1.8. This chain is Sodium channel regulatory subunit beta-3, found in Rattus norvegicus (Rat).